The primary structure comprises 282 residues: Secretory carrier-associated membrane protein 1 (282 aa).

Positions methionine 1 to aspartate 49 are disordered. The Cytoplasmic segment spans residues methionine 1–glutamine 117. Residues alanine 18–leucine 30 are compositionally biased toward polar residues. Serine 31 bears the Phosphoserine mark. The stretch at leucine 48–asparagine 93 forms a coiled coil. Transmembrane regions (helical) follow at residues tyrosine 118–valine 138, isoleucine 150–tyrosine 170, phenylalanine 185–alanine 205, and isoleucine 233–isoleucine 253. Topologically, residues glutamine 254 to leucine 282 are cytoplasmic.

Belongs to the SCAMP family.

It localises to the cell membrane. Its subcellular location is the cytoplasmic vesicle. It is found in the secretory vesicle membrane. Probably involved in membrane trafficking. In Arabidopsis thaliana (Mouse-ear cress), this protein is Secretory carrier-associated membrane protein 1 (SCAMP1).